The chain runs to 320 residues: Cytochrome f (320 aa).

Positions 1–35 (MHTKNLFYSRPQQITQYLSAFLMMVILTRTSISSA) are cleaved as a signal peptide. Tyr-36, Cys-56, Cys-59, and His-60 together coordinate heme. Residues 286–306 (VQVLLFFFASIILAQIFLVLK) form a helical membrane-spanning segment.

Belongs to the cytochrome f family. In terms of assembly, the 4 large subunits of the cytochrome b6-f complex are cytochrome b6, subunit IV (17 kDa polypeptide, petD), cytochrome f and the Rieske protein, while the 4 small subunits are PetG, PetL, PetM and PetN. The complex functions as a dimer. It depends on heme as a cofactor.

The protein resides in the plastid thylakoid membrane. In terms of biological role, component of the cytochrome b6-f complex, which mediates electron transfer between photosystem II (PSII) and photosystem I (PSI), cyclic electron flow around PSI, and state transitions. This is Cytochrome f from Cuscuta obtusiflora (Peruvian dodder).